A 248-amino-acid polypeptide reads, in one-letter code: Probable transcriptional regulatory protein RHECIAT_CH0003714 (248 aa).

It belongs to the TACO1 family.

It localises to the cytoplasm. The sequence is that of Probable transcriptional regulatory protein RHECIAT_CH0003714 from Rhizobium etli (strain CIAT 652).